Here is a 248-residue protein sequence, read N- to C-terminus: Protein UL24 homolog (248 aa).

Positions 194 to 248 (DRPRPTAQGHRPRTHVGPKPSQLTARVPRSARAGRAGGRKGQVGAVGQVCPGAQK) are disordered. Positions 218-227 (ARVPRSARAG) are enriched in low complexity.

It belongs to the herpesviridae UL24 family.

It localises to the virion. The protein resides in the host cytoplasm. It is found in the host nucleus. Its subcellular location is the host nucleolus. The protein localises to the host Golgi apparatus. In terms of biological role, may participate in nuclear egress of viral particles. Plays a role in the dispersal of several host nucleolar proteins including NCL/nucleolin and NPM1. Since deletion of host NCL/nucleolin negatively impact on nuclear egress, UL24 supposedly acts on this process through its effect on host nucleoli. This chain is Protein UL24 homolog, found in Homo sapiens (Human).